Here is an 823-residue protein sequence, read N- to C-terminus: Degenerin-like protein asic-1 (823 aa).

Residues 1-38 lie on the Cytoplasmic side of the membrane; sequence MGKNSLKRALELDVVDFAEHTSAHGIPRAYVSTGWRRY. The helical transmembrane segment at 39–59 threads the bilayer; the sequence is MWLLCFLFCLSCFGHQAYLIV. Over 60-767 the chain is Extracellular; it reads ERFNRNDIIV…FGGQLGLWMG (708 aa). 2 disulfides stabilise this stretch: cysteine 86–cysteine 518 and cysteine 494–cysteine 501. N-linked (GlcNAc...) asparagine glycosylation is found at asparagine 228, asparagine 326, asparagine 347, asparagine 415, and asparagine 486. Asparagine 527 and asparagine 546 each carry an N-linked (GlcNAc...) asparagine glycan. 4 disulfide bridges follow: cysteine 604–cysteine 687, cysteine 625–cysteine 683, cysteine 629–cysteine 681, and cysteine 638–cysteine 664. The short motif at 767–769 is the GAS motif; ion selectivity filter element; it reads GVS. A helical membrane pass occupies residues 768-788; sequence VSVITIGEVACFFFEVFISLI. The Cytoplasmic portion of the chain corresponds to 789–795; that stretch reads SSNRTKR.

It belongs to the amiloride-sensitive sodium channel (TC 1.A.6) family. Homotrimer. Heterotrimer; with other ASIC proteins producing channel with different properties.

It is found in the cell membrane. The protein localises to the postsynaptic cell membrane. It localises to the cell projection. Its subcellular location is the dendrite. The enzyme catalyses Na(+)(in) = Na(+)(out). It catalyses the reaction K(+)(in) = K(+)(out). The catalysed reaction is Li(+)(in) = Li(+)(out). It carries out the reaction Ca(2+)(in) = Ca(2+)(out). Functionally, forms voltage-independent, pH-gated trimeric sodium channels that act as postsynaptic excitatory receptors in the nervous system, playing a crucial role in regulating synaptic plasticity, learning, and memory. Promotes synaptic vesicle fusion to positively regulate the release of dopamine at dopaminergic neuron synapses. Displays high selectivity for sodium ions but can also permit the permeation of other cations. This is Degenerin-like protein asic-1 from Caenorhabditis elegans.